Here is a 91-residue protein sequence, read N- to C-terminus: Ragulator complex protein LAMTOR5 (91 aa).

M1 is modified (N-acetylmethionine).

It belongs to the LAMTOR5 family. As to quaternary structure, homodimer. Part of the Ragulator complex composed of LAMTOR1, LAMTOR2, LAMTOR3, LAMTOR4 and LAMTOR5. LAMTOR4 and LAMTOR5 form a heterodimer that interacts, through LAMTOR1, with a LAMTOR2, LAMTOR3 heterodimer. The Ragulator complex interacts with both the mTORC1 complex and heterodimers constituted of the Rag GTPases RagA/RRAGA, RagB/RRAGB, RagC/RRAGC and RagD/RRAGD; regulated by amino acid availability. The Ragulator complex interacts with SLC38A9; the probable amino acid sensor. Component of the lysosomal folliculin complex (LFC), composed of FLCN, FNIP1 (or FNIP2), RagA/RRAGA or RagB/RRAGB GDP-bound, RagC/RRAGC or RagD/RRAGD GTP-bound, and Ragulator. Interacts with phosphorylated BIRC5; the resulting complex binds pro-caspase-9, as well as active caspase-9, but much less efficiently. Interacts with SUPV3L1.

It is found in the lysosome. The protein localises to the cytoplasm. The protein resides in the cytosol. Functionally, as part of the Ragulator complex it is involved in amino acid sensing and activation of mTORC1, a signaling complex promoting cell growth in response to growth factors, energy levels, and amino acids. Activated by amino acids through a mechanism involving the lysosomal V-ATPase, the Ragulator plays a dual role for the small GTPases Rag (RagA/RRAGA, RagB/RRAGB, RagC/RRAGC and/or RagD/RRAGD): it (1) acts as a guanine nucleotide exchange factor (GEF), activating the small GTPases Rag and (2) mediates recruitment of Rag GTPases to the lysosome membrane. Activated Ragulator and Rag GTPases function as a scaffold recruiting mTORC1 to lysosomes where it is in turn activated. When complexed to BIRC5, interferes with apoptosome assembly, preventing recruitment of pro-caspase-9 to oligomerized APAF1, thereby selectively suppressing apoptosis initiated via the mitochondrial/cytochrome c pathway. In Bos taurus (Bovine), this protein is Ragulator complex protein LAMTOR5 (LAMTOR5).